Consider the following 141-residue polypeptide: ATP synthase F(0) complex subunit C3, mitochondrial (141 aa).

Residues 1 to 66 constitute a mitochondrion transit peptide; sequence MFACAKLART…REFQTSVISR (66 aa). A helical transmembrane segment spans residues 82–102; that stretch reads VGVAGSGAGIGTVFGSLIIGY. Position 109 is an N6,N6,N6-trimethyllysine (lysine 109). Residues 117 to 137 form a helical membrane-spanning segment; it reads ILGFALSEAMGLFCLMVAFLI.

This sequence belongs to the ATPase C chain family. In terms of assembly, F-type ATPases have 2 components, CF(1) - the catalytic core - and CF(0) - the membrane proton channel. CF(1) has five subunits: alpha(3), beta(3), gamma(1), delta(1), epsilon(1). CF(0) has three main subunits: a, b and c. Interacts with TMEM70 and TMEM242. Trimethylated by ATPSCKMT at Lys-109. Methylation is required for proper incorporation of the C subunit into the ATP synthase complex and mitochondrial respiration.

The protein resides in the mitochondrion membrane. Mitochondrial membrane ATP synthase (F(1)F(0) ATP synthase or Complex V) produces ATP from ADP in the presence of a proton gradient across the membrane which is generated by electron transport complexes of the respiratory chain. F-type ATPases consist of two structural domains, F(1) - containing the extramembraneous catalytic core and F(0) - containing the membrane proton channel, linked together by a central stalk and a peripheral stalk. During catalysis, ATP synthesis in the catalytic domain of F(1) is coupled via a rotary mechanism of the central stalk subunits to proton translocation. Part of the complex F(0) domain. A homomeric c-ring of probably 10 subunits is part of the complex rotary element. This is ATP synthase F(0) complex subunit C3, mitochondrial from Mus musculus (Mouse).